The sequence spans 564 residues: Hexose transporter HXT17 (564 aa).

Positions 1-12 (MQSSTESDRDIQ) are enriched in basic and acidic residues. The tract at residues 1-22 (MQSSTESDRDIQDGPDADIHVA) is disordered. Residues 1-52 (MQSSTESDRDIQDGPDADIHVAPPVEKEWSDGFDDNEVINGDNVEPPKRGLI) lie on the Cytoplasmic side of the membrane. A helical transmembrane segment spans residues 53 to 73 (GYLVIYLLCYPISFGGFLPGW). The Extracellular segment spans residues 74 to 109 (DSGITAGFINMDNFKMNFGSYKHSTGEYYLSNVRMG). A helical membrane pass occupies residues 110-130 (LLVAMFSIGCAIGGLIFARLA). Residues 131–136 (DTLGRR) lie on the Cytoplasmic side of the membrane. A helical membrane pass occupies residues 137–157 (LAIVIVVLVYMVGAIIQISSN). Residues 158 to 167 (HKWYQYFVGK) are Extracellular-facing. The chain crosses the membrane as a helical span at residues 168-188 (IIYGLGAGGCSVLCPMLLSEI). The Cytoplasmic portion of the chain corresponds to 189 to 194 (APTDLR). Residues 195–215 (GGLVSLYQLNMTFGIFLGYCS) form a helical membrane-spanning segment. Topologically, residues 216 to 229 (VYGTRKYDNTAQWR) are extracellular. Residues 230–250 (VPLGLCFLWTLIIIIGMLLVP) form a helical membrane-spanning segment. The Cytoplasmic portion of the chain corresponds to 251–333 (ESPRYLIECE…VQTFLQLTGE (83 aa)). Residues 334-350 (NYFFFYGTTIFKSVGLT) form a helical membrane-spanning segment. Topologically, residues 351–356 (DGFETS) are extracellular. A helical transmembrane segment spans residues 357 to 374 (IVLGTVNFFSTIIAVMVV). Topologically, residues 375–381 (DKIGRRK) are cytoplasmic. The helical transmembrane segment at 382 to 402 (CLLFGAAGMMACMVIFASIGV) threads the bilayer. The Extracellular portion of the chain corresponds to 403–424 (KCLYPHGQDGPSSKGAGNAMIV). A helical membrane pass occupies residues 425 to 445 (FTCFYIFCFATTWAPVAYIVV). At 446–462 (AESFPSKVKSRAMSIST) the chain is on the cytoplasmic side. A helical membrane pass occupies residues 463 to 483 (ACNWLWQFLIGFFTPFITGSI). His-484 is a topological domain (extracellular). The chain crosses the membrane as a helical span at residues 485–505 (FYYGYVFVGCLVAMFLYVFFF). The Cytoplasmic segment spans residues 506–564 (LPETIGLSLEEIQLLYEEGIKPWKSASWVPPSRRGIPSEESKTEKKDWKKFLKFSKGSD).

It belongs to the major facilitator superfamily. Sugar transporter (TC 2.A.1.1) family.

The protein resides in the membrane. Probable glucose transporter. The protein is Hexose transporter HXT17 (HXT17) of Saccharomyces cerevisiae (strain ATCC 204508 / S288c) (Baker's yeast).